Consider the following 308-residue polypeptide: uncharacterized protein (308 aa).

This is an uncharacterized protein from Ictalurid herpesvirus 1 (strain Auburn) (IcHV-1).